Reading from the N-terminus, the 65-residue chain is Large ribosomal subunit protein bL31 (65 aa).

C16, C18, C36, and C39 together coordinate Zn(2+).

The protein belongs to the bacterial ribosomal protein bL31 family. Type A subfamily. Part of the 50S ribosomal subunit. It depends on Zn(2+) as a cofactor.

Functionally, binds the 23S rRNA. This Desulfitobacterium hafniense (strain DSM 10664 / DCB-2) protein is Large ribosomal subunit protein bL31.